The primary structure comprises 78 residues: MKADIHPQYHETTVTCTCGSTFTTRSTKENGAISAEVCSQCHPFYTGKQKILDVGGRVEKFERRFGRRQPGQKVGGAK.

Residues Cys16, Cys18, Cys38, and Cys41 each coordinate Zn(2+).

This sequence belongs to the bacterial ribosomal protein bL31 family. Type A subfamily. Part of the 50S ribosomal subunit. The cofactor is Zn(2+).

In terms of biological role, binds the 23S rRNA. This chain is Large ribosomal subunit protein bL31, found in Parafrankia sp. (strain EAN1pec).